Consider the following 434-residue polypeptide: ATP-dependent protease ATPase subunit HslU (434 aa).

ATP-binding positions include Val-18, 60-65 (GVGKTE), Asp-247, Glu-312, and Arg-384.

This sequence belongs to the ClpX chaperone family. HslU subfamily. As to quaternary structure, a double ring-shaped homohexamer of HslV is capped on each side by a ring-shaped HslU homohexamer. The assembly of the HslU/HslV complex is dependent on binding of ATP.

The protein resides in the cytoplasm. In terms of biological role, ATPase subunit of a proteasome-like degradation complex; this subunit has chaperone activity. The binding of ATP and its subsequent hydrolysis by HslU are essential for unfolding of protein substrates subsequently hydrolyzed by HslV. HslU recognizes the N-terminal part of its protein substrates and unfolds these before they are guided to HslV for hydrolysis. This is ATP-dependent protease ATPase subunit HslU from Bradyrhizobium diazoefficiens (strain JCM 10833 / BCRC 13528 / IAM 13628 / NBRC 14792 / USDA 110).